We begin with the raw amino-acid sequence, 71 residues long: UPF0434 protein APH_0052 (71 aa).

The span at 52 to 63 (RKLQPEEPKEGS) shows a compositional bias: basic and acidic residues. Residues 52-71 (RKLQPEEPKEGSELQSSDNQ) are disordered.

It belongs to the UPF0434 family.

The chain is UPF0434 protein APH_0052 from Anaplasma phagocytophilum (strain HZ).